Here is a 168-residue protein sequence, read N- to C-terminus: G/U mismatch-specific DNA glycosylase (168 aa).

Belongs to the uracil-DNA glycosylase (UDG) superfamily. TDG/mug family. In terms of assembly, binds DNA as a monomer.

Its subcellular location is the cytoplasm. The catalysed reaction is Specifically hydrolyzes mismatched double-stranded DNA and polynucleotides, releasing free uracil.. Excises ethenocytosine and uracil, which can arise by alkylation or deamination of cytosine, respectively, from the corresponding mispairs with guanine in ds-DNA. It is capable of hydrolyzing the carbon-nitrogen bond between the sugar-phosphate backbone of the DNA and the mispaired base. The complementary strand guanine functions in substrate recognition. Required for DNA damage lesion repair in stationary-phase cells. The protein is G/U mismatch-specific DNA glycosylase of Escherichia coli O157:H7 (strain EC4115 / EHEC).